The following is a 394-amino-acid chain: Monoterpene synthase FDS-5, chloroplastic (394 aa).

The transit peptide at 1–65 directs the protein to the chloroplast; that stretch reads MASFISLSSK…NLNSQFMQVY (65 aa). K100, R103, and Q138 together coordinate isopentenyl diphosphate. 2 residues coordinate Mg(2+): D145 and D149. The DDXXD motif motif lies at 145–149; that stretch reads DDMMD. Residue R154 participates in dimethylallyl diphosphate binding. Residue R155 participates in isopentenyl diphosphate binding. K242, Q281, K298, and K307 together coordinate dimethylallyl diphosphate.

The protein belongs to the FPP/GGPP synthase family. It depends on Mg(2+) as a cofactor. Requires Mn(2+) as cofactor.

The protein localises to the plastid. The protein resides in the chloroplast. It carries out the reaction isopentenyl diphosphate + dimethylallyl diphosphate = (2E)-geranyl diphosphate + diphosphate. The enzyme catalyses 2 dimethylallyl diphosphate = (R,R)-chrysanthemyl diphosphate + diphosphate. It catalyses the reaction 2 dimethylallyl diphosphate = (R)-lavandulyl diphosphate + diphosphate. Condenses two molecules of dimethylallyl diphosphate (DMAPP) to produce mainly an irregular monoterpene, chrysanthemyl diphosphate (CPP) and lower amounts of a branched monoterpene, lavandulyl diphosphate (LPP). CPP is a precursor of the pyrethrin insecticides. When incubated with isopentenyl diphosphate (IPP) and DMAPP, catalyzes three competing isoprenoid condensation reactions, a chain elongation to give geranyl diphosphate (GPP), a cyclopropanation to give CPP and a branching to give LPP. The polypeptide is Monoterpene synthase FDS-5, chloroplastic (FDS-5) (Artemisia spiciformis (Spiked big sagebrush)).